The following is a 596-amino-acid chain: Aspartate--tRNA(Asp/Asn) ligase (596 aa).

Glu-172 contacts L-aspartate. The aspartate stretch occupies residues 196 to 199; the sequence is QLFK. L-aspartate is bound at residue Arg-218. ATP contacts are provided by residues 218-220 and Gln-227; that span reads RDE. An L-aspartate-binding site is contributed by His-455. An ATP-binding site is contributed by Glu-489. Arg-496 contributes to the L-aspartate binding site. 541–544 is a binding site for ATP; sequence GLDR.

This sequence belongs to the class-II aminoacyl-tRNA synthetase family. Type 1 subfamily. As to quaternary structure, homodimer.

It is found in the cytoplasm. The enzyme catalyses tRNA(Asx) + L-aspartate + ATP = L-aspartyl-tRNA(Asx) + AMP + diphosphate. Its function is as follows. Aspartyl-tRNA synthetase with relaxed tRNA specificity since it is able to aspartylate not only its cognate tRNA(Asp) but also tRNA(Asn). Reaction proceeds in two steps: L-aspartate is first activated by ATP to form Asp-AMP and then transferred to the acceptor end of tRNA(Asp/Asn). This chain is Aspartate--tRNA(Asp/Asn) ligase, found in Bordetella avium (strain 197N).